The following is a 269-amino-acid chain: L-cystine-binding protein TcyJ (269 aa).

Residues 1–20 form the signal peptide; that stretch reads MNKRKGLVLLLSVFALLGGG. Residue cysteine 21 is the site of N-palmitoyl cysteine attachment. Cysteine 21 carries S-diacylglycerol cysteine lipidation.

It belongs to the bacterial solute-binding protein 3 family. As to quaternary structure, the complex is composed of two ATP-binding proteins (TcyN), two transmembrane proteins (TcyL and TcyM) and two solute-binding proteins (TcyJ and TcyK).

The protein resides in the cell membrane. Functionally, part of the ABC transporter complex TcyJKLMN involved in L-cystine import. Is also involved in cystathionine, djenkolate, and S-methylcysteine transport. This chain is L-cystine-binding protein TcyJ (tcyJ), found in Bacillus subtilis (strain 168).